The chain runs to 48 residues: Large ribosomal subunit protein eL40 (48 aa).

It belongs to the eukaryotic ribosomal protein eL40 family.

The polypeptide is Large ribosomal subunit protein eL40 (Methanosphaera stadtmanae (strain ATCC 43021 / DSM 3091 / JCM 11832 / MCB-3)).